The primary structure comprises 277 residues: Shikimate dehydrogenase (NADP(+)) (277 aa).

Shikimate is bound by residues S15–S17 and T62. The active-site Proton acceptor is K66. Shikimate-binding residues include N87 and D102. NADP(+) contacts are provided by residues G127–A131 and I219. Residue Y221 coordinates shikimate. G242 contacts NADP(+).

This sequence belongs to the shikimate dehydrogenase family. As to quaternary structure, homodimer.

The catalysed reaction is shikimate + NADP(+) = 3-dehydroshikimate + NADPH + H(+). It participates in metabolic intermediate biosynthesis; chorismate biosynthesis; chorismate from D-erythrose 4-phosphate and phosphoenolpyruvate: step 4/7. Its function is as follows. Involved in the biosynthesis of the chorismate, which leads to the biosynthesis of aromatic amino acids. Catalyzes the reversible NADPH linked reduction of 3-dehydroshikimate (DHSA) to yield shikimate (SA). This chain is Shikimate dehydrogenase (NADP(+)), found in Bacillus cytotoxicus (strain DSM 22905 / CIP 110041 / 391-98 / NVH 391-98).